A 314-amino-acid chain; its full sequence is Elongator complex protein 5 (314 aa).

This sequence belongs to the ELP5 family. In terms of assembly, component of the elongator complex.

Its subcellular location is the cytoplasm. It is found in the nucleus. It participates in tRNA modification; 5-methoxycarbonylmethyl-2-thiouridine-tRNA biosynthesis. Its function is as follows. Component of the elongator complex, a multiprotein complex which is required for multiple tRNA modifications, including mcm5U (5-methoxycarbonylmethyl uridine), mcm5s2U (5-methoxycarbonylmethyl-2-thiouridine), and ncm5U (5-carbamoylmethyl uridine). The elongator complex catalyzes formation of carboxymethyluridine in the wobble base at position 34 in tRNAs. This Schizosaccharomyces pombe (strain 972 / ATCC 24843) (Fission yeast) protein is Elongator complex protein 5 (iki1).